The primary structure comprises 125 residues: Large ribosomal subunit protein bL20 (125 aa).

Belongs to the bacterial ribosomal protein bL20 family.

Its function is as follows. Binds directly to 23S ribosomal RNA and is necessary for the in vitro assembly process of the 50S ribosomal subunit. It is not involved in the protein synthesizing functions of that subunit. The sequence is that of Large ribosomal subunit protein bL20 from Methylobacterium sp. (strain 4-46).